A 377-amino-acid chain; its full sequence is Nitric oxide reductase FlRd-NAD(+) reductase (377 aa).

The protein belongs to the FAD-dependent oxidoreductase family. The cofactor is FAD.

The protein localises to the cytoplasm. The catalysed reaction is 2 reduced [nitric oxide reductase rubredoxin domain] + NAD(+) + H(+) = 2 oxidized [nitric oxide reductase rubredoxin domain] + NADH. Its pathway is nitrogen metabolism; nitric oxide reduction. In terms of biological role, one of at least two accessory proteins for anaerobic nitric oxide (NO) reductase. Reduces the rubredoxin moiety of NO reductase. In Escherichia coli (strain K12 / MC4100 / BW2952), this protein is Nitric oxide reductase FlRd-NAD(+) reductase.